The following is a 240-amino-acid chain: Large ribosomal subunit protein uL3 (240 aa).

Disordered regions lie at residues S138–K158 and E215–G240. Q151 is subject to N5-methylglutamine.

The protein belongs to the universal ribosomal protein uL3 family. As to quaternary structure, part of the 50S ribosomal subunit. Forms a cluster with proteins L14 and L19. Post-translationally, methylated by PrmB.

Its function is as follows. One of the primary rRNA binding proteins, it binds directly near the 3'-end of the 23S rRNA, where it nucleates assembly of the 50S subunit. The sequence is that of Large ribosomal subunit protein uL3 from Beijerinckia indica subsp. indica (strain ATCC 9039 / DSM 1715 / NCIMB 8712).